The chain runs to 465 residues: tRNA modification GTPase MnmE (465 aa).

Arg25, Glu87, and Arg126 together coordinate (6S)-5-formyl-5,6,7,8-tetrahydrofolate. The 165-residue stretch at 222-386 folds into the TrmE-type G domain; it reads TIRVVLRGLP…LIERLVQFAE (165 aa). GTP contacts are provided by residues 232 to 237, 251 to 257, and 276 to 279; these read NAGKSR, TDQAGTT, and DTAG. 2 residues coordinate Mg(2+): Ser236 and Thr257. (6S)-5-formyl-5,6,7,8-tetrahydrofolate is bound at residue Lys465.

This sequence belongs to the TRAFAC class TrmE-Era-EngA-EngB-Septin-like GTPase superfamily. TrmE GTPase family. As to quaternary structure, homodimer. Heterotetramer of two MnmE and two MnmG subunits. Requires K(+) as cofactor.

Its subcellular location is the cytoplasm. Its function is as follows. Exhibits a very high intrinsic GTPase hydrolysis rate. Involved in the addition of a carboxymethylaminomethyl (cmnm) group at the wobble position (U34) of certain tRNAs, forming tRNA-cmnm(5)s(2)U34. In Rhodopirellula baltica (strain DSM 10527 / NCIMB 13988 / SH1), this protein is tRNA modification GTPase MnmE.